A 63-amino-acid polypeptide reads, in one-letter code: uncharacterized protein (63 aa).

This is an uncharacterized protein from Azospirillum brasilense.